The sequence spans 169 residues: Putative phosphoesterase SERP0604 (169 aa).

His-34 functions as the Proton donor in the catalytic mechanism. 2 short sequence motifs (HXTX) span residues 34–37 (HITI) and 115–118 (HFTI). Residue His-115 is the Proton acceptor of the active site.

Belongs to the 2H phosphoesterase superfamily. YjcG family.

The protein is Putative phosphoesterase SERP0604 of Staphylococcus epidermidis (strain ATCC 35984 / DSM 28319 / BCRC 17069 / CCUG 31568 / BM 3577 / RP62A).